A 510-amino-acid polypeptide reads, in one-letter code: ATP synthase subunit alpha, chloroplastic (510 aa).

170-177 (GDRQTGKT) is an ATP binding site.

Belongs to the ATPase alpha/beta chains family. F-type ATPases have 2 components, CF(1) - the catalytic core - and CF(0) - the membrane proton channel. CF(1) has five subunits: alpha(3), beta(3), gamma(1), delta(1), epsilon(1). CF(0) has four main subunits: a, b, b' and c.

It is found in the plastid. The protein localises to the chloroplast thylakoid membrane. The enzyme catalyses ATP + H2O + 4 H(+)(in) = ADP + phosphate + 5 H(+)(out). Produces ATP from ADP in the presence of a proton gradient across the membrane. The alpha chain is a regulatory subunit. This Phaseolus vulgaris (Kidney bean) protein is ATP synthase subunit alpha, chloroplastic.